The following is a 256-amino-acid chain: PGL/p-HBAD biosynthesis glycosyltransferase Mb2981 (256 aa).

This sequence belongs to the glycosyltransferase 2 family.

Its function is as follows. Involved in glycosylation steps downstream of mono-O-methyl-glycosyl-p-hydroxybenzoic acid derivative (p-HBAD I) and 2-O-methyl-rhamnosyl-phenolphthiocerol dimycocerosate (mycoside B) during the p-hydroxybenzoic acid derivatives (p-HBAD) and glycosylated phenolphthiocerol dimycocerosates (PGL) biosynthesis. This is PGL/p-HBAD biosynthesis glycosyltransferase Mb2981 from Mycobacterium bovis (strain ATCC BAA-935 / AF2122/97).